Consider the following 363-residue polypeptide: Probable transglycosylase BTH_I0986 (363 aa).

This sequence belongs to the glycosyltransferase group 1 family. Glycosyltransferase 4 subfamily.

Probably a transglycosylase. Probably involved in synthesis of the outer membrane receptor for a cellular contact-dependent growth inhibition (CDI) system. In Burkholderia thailandensis (strain ATCC 700388 / DSM 13276 / CCUG 48851 / CIP 106301 / E264), this protein is Probable transglycosylase BTH_I0986.